Consider the following 296-residue polypeptide: 4-hydroxy-tetrahydrodipicolinate synthase (296 aa).

Pyruvate is bound at residue T47. Y136 serves as the catalytic Proton donor/acceptor. Catalysis depends on K164, which acts as the Schiff-base intermediate with substrate. V206 contacts pyruvate.

It belongs to the DapA family. Homotetramer; dimer of dimers.

Its subcellular location is the cytoplasm. It catalyses the reaction L-aspartate 4-semialdehyde + pyruvate = (2S,4S)-4-hydroxy-2,3,4,5-tetrahydrodipicolinate + H2O + H(+). The protein operates within amino-acid biosynthesis; L-lysine biosynthesis via DAP pathway; (S)-tetrahydrodipicolinate from L-aspartate: step 3/4. In terms of biological role, catalyzes the condensation of (S)-aspartate-beta-semialdehyde [(S)-ASA] and pyruvate to 4-hydroxy-tetrahydrodipicolinate (HTPA). The sequence is that of 4-hydroxy-tetrahydrodipicolinate synthase from Thermosynechococcus vestitus (strain NIES-2133 / IAM M-273 / BP-1).